A 324-amino-acid polypeptide reads, in one-letter code: Tubulin alpha-8 chain (324 aa).

GTP contacts are provided by serine 15, glycine 19, threonine 20, threonine 54, asparagine 81, and asparagine 103. Glutamate 129 is an active-site residue.

This sequence belongs to the tubulin family. In terms of assembly, dimer of alpha and beta chains. A typical microtubule is a hollow water-filled tube with an outer diameter of 25 nm and an inner diameter of 15 nM. Alpha-beta heterodimers associate head-to-tail to form protofilaments running lengthwise along the microtubule wall with the beta-tubulin subunit facing the microtubule plus end conferring a structural polarity. Microtubules usually have 13 protofilaments but different protofilament numbers can be found in some organisms and specialized cells. Requires Mg(2+) as cofactor. Some glutamate residues at the C-terminus are polyglycylated, resulting in polyglycine chains on the gamma-carboxyl group. Glycylation is mainly limited to tubulin incorporated into axonemes (cilia and flagella) whereas glutamylation is prevalent in neuronal cells, centrioles, axonemes, and the mitotic spindle. Both modifications can coexist on the same protein on adjacent residues, and lowering polyglycylation levels increases polyglutamylation, and reciprocally. The precise function of polyglycylation is still unclear. In terms of processing, some glutamate residues at the C-terminus are polyglutamylated, resulting in polyglutamate chains on the gamma-carboxyl group. Polyglutamylation plays a key role in microtubule severing by spastin (SPAST). SPAST preferentially recognizes and acts on microtubules decorated with short polyglutamate tails: severing activity by SPAST increases as the number of glutamates per tubulin rises from one to eight, but decreases beyond this glutamylation threshold.

The protein localises to the cytoplasm. Its subcellular location is the cytoskeleton. It carries out the reaction GTP + H2O = GDP + phosphate + H(+). In terms of biological role, tubulin is the major constituent of microtubules, a cylinder consisting of laterally associated linear protofilaments composed of alpha- and beta-tubulin heterodimers. Microtubules grow by the addition of GTP-tubulin dimers to the microtubule end, where a stabilizing cap forms. Below the cap, tubulin dimers are in GDP-bound state, owing to GTPase activity of alpha-tubulin. The sequence is that of Tubulin alpha-8 chain from Gallus gallus (Chicken).